A 226-amino-acid polypeptide reads, in one-letter code: Tyramine N-feruloyltransferase 10/30 (226 aa).

An important in binding site and for catalytic activity region spans residues 29–45 (HIYKLFYQIHEYHNYTH). The region spanning 72–222 (VLLLEVSPTP…VGDALQKYAD (151 aa)) is the N-acetyltransferase domain.

The protein belongs to the acetyltransferase family. Homodimer.

It is found in the cytoplasm. The enzyme catalyses tyramine + (E)-feruloyl-CoA = N-[(E)-feruloyl]tyramine + CoA + H(+). Its activity is regulated as follows. Inhibited by (2-hydroxyphenyl)amino sulfinyl acetic acid 1,1-dimethylethyl ester, by DEPC and by N-ethylmaleimide. Synthesizes amides which are involved in stress response in the cell wall. Catalyzes the synthesis of hydroxycinnamic acid amides from hydroxycinnamoyl-CoA thioesters and various hydroxyphenylethylamines such as 4-coumaroyl-CoA and sinapoyl-CoA. This is Tyramine N-feruloyltransferase 10/30 (THT10) from Nicotiana tabacum (Common tobacco).